Here is a 191-residue protein sequence, read N- to C-terminus: Xanthine phosphoribosyltransferase (191 aa).

Residues Leu-20 and Asn-27 each coordinate xanthine. Residue Ala-128–Ala-132 participates in 5-phospho-alpha-D-ribose 1-diphosphate binding. Lys-156 contacts xanthine.

Belongs to the purine/pyrimidine phosphoribosyltransferase family. Xpt subfamily. As to quaternary structure, homodimer.

The protein localises to the cytoplasm. The enzyme catalyses XMP + diphosphate = xanthine + 5-phospho-alpha-D-ribose 1-diphosphate. The protein operates within purine metabolism; XMP biosynthesis via salvage pathway; XMP from xanthine: step 1/1. In terms of biological role, converts the preformed base xanthine, a product of nucleic acid breakdown, to xanthosine 5'-monophosphate (XMP), so it can be reused for RNA or DNA synthesis. The chain is Xanthine phosphoribosyltransferase from Acinetobacter baumannii (strain AB307-0294).